Consider the following 431-residue polypeptide: Enolase (431 aa).

Q163 is a (2R)-2-phosphoglycerate binding site. Catalysis depends on E205, which acts as the Proton donor. 3 residues coordinate Mg(2+): D242, E288, and D315. (2R)-2-phosphoglycerate is bound by residues K340, R369, S370, and K391. K340 (proton acceptor) is an active-site residue.

It belongs to the enolase family. The cofactor is Mg(2+).

The protein resides in the cytoplasm. It is found in the secreted. Its subcellular location is the cell surface. It catalyses the reaction (2R)-2-phosphoglycerate = phosphoenolpyruvate + H2O. Its pathway is carbohydrate degradation; glycolysis; pyruvate from D-glyceraldehyde 3-phosphate: step 4/5. Functionally, catalyzes the reversible conversion of 2-phosphoglycerate (2-PG) into phosphoenolpyruvate (PEP). It is essential for the degradation of carbohydrates via glycolysis. The polypeptide is Enolase (Bacillus cereus (strain G9842)).